Consider the following 163-residue polypeptide: D-aminoacyl-tRNA deacylase (163 aa).

The Gly-cisPro motif, important for rejection of L-amino acids signature appears at 141 to 142; the sequence is GP.

It belongs to the DTD family. Homodimer.

The protein localises to the cytoplasm. The catalysed reaction is glycyl-tRNA(Ala) + H2O = tRNA(Ala) + glycine + H(+). The enzyme catalyses a D-aminoacyl-tRNA + H2O = a tRNA + a D-alpha-amino acid + H(+). Functionally, an aminoacyl-tRNA editing enzyme that deacylates mischarged D-aminoacyl-tRNAs. Also deacylates mischarged glycyl-tRNA(Ala), protecting cells against glycine mischarging by AlaRS. Acts via tRNA-based rather than protein-based catalysis; rejects L-amino acids rather than detecting D-amino acids in the active site. By recycling D-aminoacyl-tRNA to D-amino acids and free tRNA molecules, this enzyme counteracts the toxicity associated with the formation of D-aminoacyl-tRNA entities in vivo and helps enforce protein L-homochirality. This Neisseria gonorrhoeae (strain ATCC 700825 / FA 1090) protein is D-aminoacyl-tRNA deacylase.